Here is a 233-residue protein sequence, read N- to C-terminus: Ribose-5-phosphate isomerase A (233 aa).

Substrate is bound by residues Thr-28 to Thr-31, Asp-85 to Asp-88, and Lys-98 to Gly-101. Glu-107 serves as the catalytic Proton acceptor. Position 125 (Lys-125) interacts with substrate.

This sequence belongs to the ribose 5-phosphate isomerase family. Homodimer.

The enzyme catalyses aldehydo-D-ribose 5-phosphate = D-ribulose 5-phosphate. It functions in the pathway carbohydrate degradation; pentose phosphate pathway; D-ribose 5-phosphate from D-ribulose 5-phosphate (non-oxidative stage): step 1/1. Catalyzes the reversible conversion of ribose-5-phosphate to ribulose 5-phosphate. The chain is Ribose-5-phosphate isomerase A from Roseiflexus sp. (strain RS-1).